The primary structure comprises 92 residues: C-C motif chemokine 4 (92 aa).

The signal sequence occupies residues 1–23 (MKLGVTVLSVALLVAALCPPALS). Intrachain disulfides connect Cys-34–Cys-58 and Cys-35–Cys-74.

The protein belongs to the intercrine beta (chemokine CC) family. In terms of assembly, homodimer.

The protein resides in the secreted. Monokine with inflammatory and chemokinetic properties. The sequence is that of C-C motif chemokine 4 (CCL4) from Oryctolagus cuniculus (Rabbit).